Consider the following 91-residue polypeptide: CRISPR-associated endoribonuclease Cas2 2 (91 aa).

Asp8 serves as a coordination point for Mg(2+).

It belongs to the CRISPR-associated endoribonuclease Cas2 protein family. In terms of assembly, homodimer, forms a heterotetramer with a Cas1 homodimer. Mg(2+) serves as cofactor.

Its function is as follows. CRISPR (clustered regularly interspaced short palindromic repeat), is an adaptive immune system that provides protection against mobile genetic elements (viruses, transposable elements and conjugative plasmids). CRISPR clusters contain sequences complementary to antecedent mobile elements and target invading nucleic acids. CRISPR clusters are transcribed and processed into CRISPR RNA (crRNA). Functions as a ssRNA-specific endoribonuclease. Involved in the integration of spacer DNA into the CRISPR cassette. The sequence is that of CRISPR-associated endoribonuclease Cas2 2 from Pyrobaculum aerophilum (strain ATCC 51768 / DSM 7523 / JCM 9630 / CIP 104966 / NBRC 100827 / IM2).